Consider the following 259-residue polypeptide: Ribonuclease HII (259 aa).

Positions 72–259 (SYIAGIDEVG…PIKDMIKNKL (188 aa)) constitute an RNase H type-2 domain. A divalent metal cation contacts are provided by Asp78, Glu79, and Asp170.

It belongs to the RNase HII family. Mn(2+) is required as a cofactor. Requires Mg(2+) as cofactor.

The protein localises to the cytoplasm. The enzyme catalyses Endonucleolytic cleavage to 5'-phosphomonoester.. Functionally, endonuclease that specifically degrades the RNA of RNA-DNA hybrids. This Bacillus cytotoxicus (strain DSM 22905 / CIP 110041 / 391-98 / NVH 391-98) protein is Ribonuclease HII.